Here is a 149-residue protein sequence, read N- to C-terminus: Transcriptional repressor NrdR (149 aa).

A zinc finger spans residues 3–34 (CPFCDTEETKVIDSRLVSDGYQVRRRRECGHC). Positions 49-139 (PKIIKTDGTR…VYLSFDDIDQ (91 aa)) constitute an ATP-cone domain.

The protein belongs to the NrdR family. Zn(2+) serves as cofactor.

Its function is as follows. Negatively regulates transcription of bacterial ribonucleotide reductase nrd genes and operons by binding to NrdR-boxes. This is Transcriptional repressor NrdR from Haemophilus influenzae (strain 86-028NP).